The chain runs to 842 residues: ATP-binding cassette sub-family B member 6 (842 aa).

At 1 to 26 the chain is on the lumenal side; that stretch reads MVTVGNYCETEGPAGPAWTQNGLSPC. Positions 1 to 205 are required for the lysosomal targeting; that stretch reads MVTVGNYCET…SGGLFILGLW (205 aa). Positions 1-236 are required for ATPase activity; it reads MVTVGNYCET…GNQGRSTDRR (236 aa). A disulfide bridge connects residues C8 and C26. The helical transmembrane segment at 27–47 threads the bilayer; it reads FFFTLVPSTLLTLGVLALVLV. Topologically, residues 48 to 72 are cytoplasmic; that stretch reads LPRRRREVPAGPEELSWAAGPRVAP. The helical transmembrane segment at 73–93 threads the bilayer; sequence YVLQLFLATLQMALPLAGLAG. Topologically, residues 94 to 106 are lumenal; sequence RVGTARGVRLPGY. A helical transmembrane segment spans residues 107–127; sequence LLLASVLESLASVCGLWLLVV. Residues 128–147 lie on the Cytoplasmic side of the membrane; sequence ERSQARQSLAMGVWMKFRHS. The chain crosses the membrane as a helical span at residues 148 to 168; the sequence is LGLLLLWTVTFAAENLALVSW. Over 169-185 the chain is Lumenal; that stretch reads NSPQWWWARADLGQQVQ. The helical transmembrane segment at 186-206 threads the bilayer; the sequence is FGLWVLRYVTSGGLFILGLWA. Residues 207 to 263 lie on the Cytoplasmic side of the membrane; sequence PGLRPQSYTLHVHEEDQDVGGNQGRSTDRRSTWRDLGRKLRLLSSYLWPRGSPSLQL. Residues 264-284 traverse the membrane as a helical segment; sequence IVLICLGLMGLERALNVLVPI. The 292-residue stretch at 265–556 folds into the ABC transmembrane type-1 domain; it reads VLICLGLMGL…FGTYYRMIQT (292 aa). Topologically, residues 285–291 are lumenal; that stretch reads FYRDIVN. The chain crosses the membrane as a helical span at residues 292-312; it reads LLTAKAPWSSLAWTVTTYVFL. Over 313 to 375 the chain is Cytoplasmic; it reads KFLQGGGTGS…TGEVLRIVDR (63 aa). Residues 376 to 396 traverse the membrane as a helical segment; it reads GTSSVTGLLSYLVFSIIPTLA. D397 is a topological domain (lumenal). A helical transmembrane segment spans residues 398 to 418; sequence IIIGIIYFSMFFNAWFGLIVF. Residues 419-499 lie on the Cytoplasmic side of the membrane; that stretch reads LCMSLYLILT…STASLVVLNQ (81 aa). Residues 500 to 520 traverse the membrane as a helical segment; it reads TQNLVIGLGLLAGSLLCAYFV. The Lumenal portion of the chain corresponds to 521-529; sequence SEQKLQVGD. Residues 530–550 form a helical membrane-spanning segment; the sequence is FVLFGTYITQLYMPLNWFGTY. Residues 551–842 lie on the Cytoplasmic side of the membrane; the sequence is YRMIQTNFID…PEESKPQDTA (292 aa). The ABC transporter domain occupies 590–824; sequence IEFENVHFSY…GGVYAEMWQL (235 aa). Residues Y599 and 623-634 contribute to the ATP site; that span reads GPSGAGKSTILR.

This sequence belongs to the ABC transporter superfamily. ABCB family. Heavy Metal importer (TC 3.A.1.210) subfamily. As to quaternary structure, homodimer. N-glycosylated.

Its subcellular location is the cell membrane. The protein localises to the mitochondrion outer membrane. It is found in the endoplasmic reticulum membrane. It localises to the golgi apparatus membrane. The protein resides in the endosome membrane. Its subcellular location is the lysosome membrane. The protein localises to the late endosome membrane. It is found in the early endosome membrane. It localises to the secreted. The protein resides in the extracellular exosome. Its subcellular location is the mitochondrion. The protein localises to the endosome. It is found in the multivesicular body membrane. It localises to the melanosome membrane. The enzyme catalyses coproporphyrin III(in) + ATP + H2O = coproporphyrin III(out) + ADP + phosphate + H(+). The catalysed reaction is coproporphyrinogen III(in) + ATP + H2O = coproporphyrinogen III(out) + ADP + phosphate + H(+). It catalyses the reaction heme b(in) + ATP + H2O = heme b(out) + ADP + phosphate + H(+). It carries out the reaction pheophorbide a(in) + ATP + H2O = pheophorbide a(out) + ADP + phosphate + H(+). The enzyme catalyses protoporphyrin IX(in) + ATP + H2O = protoporphyrin IX(out) + ADP + phosphate + H(+). The catalysed reaction is coproporphyrin I(in) + ATP + H2O = coproporphyrin I(out) + ADP + phosphate + H(+). It catalyses the reaction uroporphyrin I(in) + ATP + H2O = uroporphyrin I(out) + ADP + phosphate + H(+). It carries out the reaction uroporphyrin III(in) + ATP + H2O = uroporphyrin III(out) + ADP + phosphate + H(+). ATP-dependent transporter that catalyzes the transport of a broad-spectrum of porphyrins from the cytoplasm to the extracellular space through the plasma membrane or into the vesicle lumen. May also function as an ATP-dependent importer of porphyrins from the cytoplasm into the mitochondria, in turn may participate in the de novo heme biosynthesis regulation and in the coordination of heme and iron homeostasis during phenylhydrazine stress. May play a key role in the early steps of melanogenesis producing PMEL amyloid fibrils. In vitro, it confers to cells a resistance to toxic metal such as arsenic and cadmium and against chemotherapeutics agent such as 5-fluorouracil, SN-38 and vincristin. In addition may play a role in the transition metal homeostasis. The sequence is that of ATP-binding cassette sub-family B member 6 from Mus musculus (Mouse).